Consider the following 288-residue polypeptide: Pantothenate synthetase (288 aa).

Position 30-37 (30-37 (MGNLHEGH)) interacts with ATP. His-37 functions as the Proton donor in the catalytic mechanism. Gln-61 contacts (R)-pantoate. Gln-61 provides a ligand contact to beta-alanine. Position 148–151 (148–151 (GQKD)) interacts with ATP. Residue Gln-154 coordinates (R)-pantoate. ATP is bound by residues Val-177 and 185–188 (LSSR).

Belongs to the pantothenate synthetase family. Homodimer.

The protein localises to the cytoplasm. It carries out the reaction (R)-pantoate + beta-alanine + ATP = (R)-pantothenate + AMP + diphosphate + H(+). It participates in cofactor biosynthesis; (R)-pantothenate biosynthesis; (R)-pantothenate from (R)-pantoate and beta-alanine: step 1/1. Its function is as follows. Catalyzes the condensation of pantoate with beta-alanine in an ATP-dependent reaction via a pantoyl-adenylate intermediate. The sequence is that of Pantothenate synthetase from Psychrobacter arcticus (strain DSM 17307 / VKM B-2377 / 273-4).